Reading from the N-terminus, the 171-residue chain is 3-hydroxydecanoyl-[acyl-carrier-protein] dehydratase (171 aa).

The active site involves His-70.

It belongs to the thioester dehydratase family. FabA subfamily. In terms of assembly, homodimer.

The protein resides in the cytoplasm. It catalyses the reaction a (3R)-hydroxyacyl-[ACP] = a (2E)-enoyl-[ACP] + H2O. The catalysed reaction is (3R)-hydroxydecanoyl-[ACP] = (2E)-decenoyl-[ACP] + H2O. The enzyme catalyses (2E)-decenoyl-[ACP] = (3Z)-decenoyl-[ACP]. It participates in lipid metabolism; fatty acid biosynthesis. Necessary for the introduction of cis unsaturation into fatty acids. Catalyzes the dehydration of (3R)-3-hydroxydecanoyl-ACP to E-(2)-decenoyl-ACP and then its isomerization to Z-(3)-decenoyl-ACP. Can catalyze the dehydratase reaction for beta-hydroxyacyl-ACPs with saturated chain lengths up to 16:0, being most active on intermediate chain length. The protein is 3-hydroxydecanoyl-[acyl-carrier-protein] dehydratase of Stenotrophomonas maltophilia (strain R551-3).